The chain runs to 125 residues: Inner membrane protein YbaN (125 aa).

Residues 1-6 (MQRIIL) are Cytoplasmic-facing. Residues 7–26 (IIIGWLAVVLGTLGVVLPVL) traverse the membrane as a helical segment. Residues 27–45 (PTTPFILLAAWCFARSSPR) lie on the Periplasmic side of the membrane. Residues 46–63 (FHAWLLYRSWFGSYLRFW) form a helical membrane-spanning segment. Topologically, residues 64 to 74 (QKHHAMPRGVK) are cytoplasmic. Residues 75–92 (PRAILLILLTFAISLWFV) traverse the membrane as a helical segment. Topologically, residues 93 to 95 (QMP) are periplasmic. Residues 96–118 (WVRIMLLVILACLLFYMWRIPVI) traverse the membrane as a helical segment. The Cytoplasmic portion of the chain corresponds to 119–125 (DEKQEKH).

It localises to the cell inner membrane. In Escherichia coli O157:H7, this protein is Inner membrane protein YbaN (ybaN).